A 95-amino-acid chain; its full sequence is Alpha-defensin 20 (95 aa).

Residues methionine 1–alanine 19 form the signal peptide. The propeptide occupies aspartate 20 to serine 58. The disordered stretch occupies residues isoleucine 22 to lysine 57. The span at threonine 25–glutamine 40 shows a compositional bias: acidic residues. 3 disulfide bridges follow: cysteine 64/cysteine 89, cysteine 66/cysteine 81, and cysteine 71/cysteine 88.

Belongs to the alpha-defensin family.

It is found in the secreted. Its function is as follows. May have microbicidal activities. This Mus musculus (Mouse) protein is Alpha-defensin 20 (Defa20).